The following is a 2183-amino-acid chain: RNA replication polyprotein (2183 aa).

The region spanning 63-256 (SPHSYRPHSH…YIQPVAGSYL (194 aa)) is the Alphavirus-like MT domain. A Fe2OG dioxygenase domain is found at 762-853 (FYNQCLVQEY…RISLTFRLTK (92 aa)). His-780, Asp-782, and His-835 together coordinate Fe cation. Arg-844 serves as a coordination point for 2-oxoglutarate. The segment at 883–910 (ERRSHQSGGRPAVELEGHEREKVNSDSS) is disordered. A compositionally biased stretch (basic and acidic residues) spans 895–906 (VELEGHEREKVN). The region spanning 1091 to 1199 (FHSFDVEADG…DNHFKPCMPV (109 aa)) is the OTU domain. A Peptidase C23 domain is found at 1198-1288 (PVNGCVIRAI…LEKEHLAHIP (91 aa)). Active-site residues include Cys-1202 and His-1283. Positions 1349-1520 (KEAQKDLASK…SGRSYKFNIL (172 aa)) constitute a (+)RNA virus helicase ATP-binding domain. An ATP-binding site is contributed by 1374–1381 (GTFGCGKS). Positions 1521 to 1667 (SQRFRNPVFY…TKRACNDDII (147 aa)) constitute a (+)RNA virus helicase C-terminal domain. The RdRp catalytic domain maps to 1961-2068 (GVCTESDYEA…NSRLKVTNRF (108 aa)).

The protein belongs to the potexviruses/carlaviruses RNA replication protein family. Fe(2+) serves as cofactor. Post-translationally, specific enzymatic cleavages by the viral protease yield mature proteins.

The catalysed reaction is ATP + H2O = ADP + phosphate + H(+). The enzyme catalyses RNA(n) + a ribonucleoside 5'-triphosphate = RNA(n+1) + diphosphate. RNA-directed RNA polymerase involved in viral RNA replication. In terms of biological role, protease: Thiol protease that cleaves the polyprotein. The protein is RNA replication polyprotein of Apple stem pitting virus (isolate PA66) (ASPV).